The chain runs to 210 residues: FMN-dependent NADH:quinone oxidoreductase (210 aa).

FMN is bound by residues 17-19 (SCS) and 148-151 (SSGG).

The protein belongs to the azoreductase type 1 family. In terms of assembly, homodimer. FMN is required as a cofactor.

The catalysed reaction is 2 a quinone + NADH + H(+) = 2 a 1,4-benzosemiquinone + NAD(+). It catalyses the reaction N,N-dimethyl-1,4-phenylenediamine + anthranilate + 2 NAD(+) = 2-(4-dimethylaminophenyl)diazenylbenzoate + 2 NADH + 2 H(+). Functionally, quinone reductase that provides resistance to thiol-specific stress caused by electrophilic quinones. Its function is as follows. Also exhibits azoreductase activity. Catalyzes the reductive cleavage of the azo bond in aromatic azo compounds to the corresponding amines. The sequence is that of FMN-dependent NADH:quinone oxidoreductase from Geotalea uraniireducens (strain Rf4) (Geobacter uraniireducens).